The sequence spans 232 residues: Eukaryotic translation initiation factor NCBP (232 aa).

Positions 1-11 (MEPAVERKVPE) are enriched in basic and acidic residues. Positions 1–49 (MEPAVERKVPEQEEQLQPSHARAEDAPPAAVEEEDEAEAEESERRNREL) are disordered. Over residues 31–41 (VEEEDEAEAEE) the composition is skewed to acidic residues.

The protein belongs to the eukaryotic initiation factor 4E family. EIF4F is a multi-subunit complex, the composition of which varies with external and internal environmental conditions. It is composed of at least EIF4A, EIF4E and EIF4G. EIF4E is also known to interact with other partners. In higher plants two isoforms of EIF4F have been identified, named isoform EIF4F and isoform EIF(iso)4F. Isoform EIF4F has subunits p220 and p26, whereas isoform EIF(iso)4F has subunits p82 and p28.

Functionally, recognizes and binds the 7-methylguanosine-containing mRNA cap during an early step in the initiation of protein synthesis and facilitates ribosome binding by inducing the unwinding of the mRNAs secondary structures. The protein is Eukaryotic translation initiation factor NCBP (NCBP) of Triticum aestivum (Wheat).